We begin with the raw amino-acid sequence, 999 residues long: MIQSSLYRALNKGFDYQILACKDFKESELAKEVISYFKPNTKAILFPEFRAKKNDDLRSFFEEFLQLLGGLREFYQALENKQETIIIAPISALLHPLPKKELLESFKITLLEKYNLKDLKDKLFYYGYEILDLVEVEGEASFRGDIVDIYAPNSKAYRLSFFDTECESIKEFDPITQMSLKEDLLEIEIPPTLFSLDESSYKDLKTKVEQSPLNSFSKDLTSFGLWFLGEKAQDLLIVYKSIISPRALEEIQELASLNELDCERFKFLKVLENAQGYEDLEIHAHALEGFIALHSNHKITLLAPNKTILDNAISALDAGNMECVIAPFVLNFKTPDGIFISLNSFERKKKRQKSKLALNELNPGEWVVHDDYGVGVFSQLVQHSVLGSKRDFLEIAYLGEDKLLLPVENLHLIARYVAQSDSVPAKDRLGKGSFLKLKAKVRTKLLEIASKIIELAAERNLILGKKMDVHLAELEVFKSHAGFEYTSDQEKAIAEISKDLSSHRVMDRLLSGDVGFGKTEVAMHAIFCAFLNGFQSALVVPTTLLAHQHFETLRARFENFGVKVARLDRYASEKNKLLKAVELGQVDALIGTHAILGAKFKNLGLVVVDEEHKFGVKQKEALKELSKSVHFLSMSATPIPRTLNMALSQIKGISSLKTPPTDRKPSRTFLKEKNDELLKEIIYRELRRNGQIFYIHNHIASILKVKTKLEDLIPKLKIAILHSQINANESEEIMLEFAKGNYQVLLCTSIVESGIHLPNANTIIIDNAQNFGLADLHQLRGRVGRGKKEGFCYFLIEDQKSLNEQALKRLLALEKNSYLGSGESVAYHDLEIRGGGNLLGQDQSGHIKNIGYALYTRMLEDAIYELSGGKKRLEKSVEIQLGVSAFLNPELIASDSLRLDLYRRLSLCENTDEVGQIHEEIEDRFGKIDDLSAQFLQIITLKILANQLGIIKLSNFNQNITITYSDEKKESLKAPSKDDNDILETLLKHLRAQISLKRR.

Residues Asp-499–Leu-656 form the Helicase ATP-binding domain. Gly-512 to Thr-519 is an ATP binding site. The DEEH box signature appears at Asp-609–His-612. In terms of domain architecture, Helicase C-terminal spans Leu-677–Arg-833.

The protein in the N-terminal section; belongs to the UvrB family. In the C-terminal section; belongs to the helicase family. RecG subfamily.

It is found in the cytoplasm. In terms of biological role, couples transcription and DNA repair by recognizing RNA polymerase (RNAP) stalled at DNA lesions. Mediates ATP-dependent release of RNAP and its truncated transcript from the DNA, and recruitment of nucleotide excision repair machinery to the damaged site. The protein is Transcription-repair-coupling factor of Helicobacter pylori (strain ATCC 700392 / 26695) (Campylobacter pylori).